Here is a 759-residue protein sequence, read N- to C-terminus: 1,4-alpha-glucan branching enzyme GlgB (759 aa).

A disordered region spans residues 1–22; that stretch reads MAKTKGLPKDTAVTPSPHLRPH. Asp-422 functions as the Nucleophile in the catalytic mechanism. Catalysis depends on Glu-475, which acts as the Proton donor.

The protein belongs to the glycosyl hydrolase 13 family. GlgB subfamily. Monomer.

The catalysed reaction is Transfers a segment of a (1-&gt;4)-alpha-D-glucan chain to a primary hydroxy group in a similar glucan chain.. It participates in glycan biosynthesis; glycogen biosynthesis. Catalyzes the formation of the alpha-1,6-glucosidic linkages in glycogen by scission of a 1,4-alpha-linked oligosaccharide from growing alpha-1,4-glucan chains and the subsequent attachment of the oligosaccharide to the alpha-1,6 position. The protein is 1,4-alpha-glucan branching enzyme GlgB of Mycobacterium sp. (strain KMS).